The chain runs to 146 residues: uncharacterized protein (146 aa).

This is an uncharacterized protein from Acidianus filamentous virus 1 (isolate United States/Yellowstone) (AFV-1).